The following is a 459-amino-acid chain: Cysteine--tRNA ligase (459 aa).

Cys28 contributes to the Zn(2+) binding site. The short motif at 30 to 40 is the 'HIGH' region element; that stretch reads VTVYDLCHFGH. Positions 209, 234, and 238 each coordinate Zn(2+). Residues 266–270 carry the 'KMSKS' region motif; sequence KMSKS. Lys269 contacts ATP.

Belongs to the class-I aminoacyl-tRNA synthetase family. Monomer. Requires Zn(2+) as cofactor.

It is found in the cytoplasm. The catalysed reaction is tRNA(Cys) + L-cysteine + ATP = L-cysteinyl-tRNA(Cys) + AMP + diphosphate. The sequence is that of Cysteine--tRNA ligase from Actinobacillus succinogenes (strain ATCC 55618 / DSM 22257 / CCUG 43843 / 130Z).